The primary structure comprises 341 residues: Pectate trisaccharide-lyase (341 aa).

A signal peptide spans 1-27; the sequence is MKKLISIIFIFVLGVVGSLTAAVSAEA. A propeptide spanning residues 28–39 is cleaved from the precursor; it reads ASALNSGKVNPL. 2 PbH1 repeats span residues 131–156 and 158–186; these read ANNIIIRNLKIHEVASGDKDAIGIEG and SKNIWVDHNELYHSLNVDKDYYDGLFDVK. 3 residues coordinate Ca(2+): Asp150, Asp180, and Asp184. Arg233 is a catalytic residue. PbH1 repeat units lie at residues 262 to 283 and 287 to 322; these read GARIRIENNLFENAKDPIVSWY and PGYWHVSNNKFVNSRGSMPTTSTTTYNPPYSYSLDN.

Belongs to the polysaccharide lyase 1 family. Ca(2+) is required as a cofactor.

The protein localises to the secreted. The catalysed reaction is eliminative cleavage of unsaturated trigalacturonate as the major product from the reducing end of polygalacturonic acid/pectate.. Its function is as follows. Cleaves unsaturated oligo-galacturonides from pectin. The major product is trigalacturonate; digalacturonate and tetragalacturonate are also produced. Activity on methylated pectins decreases with an increasing degree of methylation. This chain is Pectate trisaccharide-lyase, found in Bacillus licheniformis (strain ATCC 14580 / DSM 13 / JCM 2505 / CCUG 7422 / NBRC 12200 / NCIMB 9375 / NCTC 10341 / NRRL NRS-1264 / Gibson 46).